Consider the following 186-residue polypeptide: Large ribosomal subunit protein uL5c (186 aa).

This sequence belongs to the universal ribosomal protein uL5 family. As to quaternary structure, part of the 50S ribosomal subunit; contacts the 5S rRNA.

The protein localises to the plastid. The protein resides in the chloroplast. Binds 5S rRNA, forms part of the central protuberance of the 50S subunit. In Chaetosphaeridium globosum (Charophycean green alga), this protein is Large ribosomal subunit protein uL5c (rpl5).